The chain runs to 493 residues: Lysine--tRNA ligase (493 aa).

Residues Glu-402 and Glu-409 each coordinate Mg(2+).

This sequence belongs to the class-II aminoacyl-tRNA synthetase family. Homodimer. Mg(2+) is required as a cofactor.

The protein localises to the cytoplasm. The enzyme catalyses tRNA(Lys) + L-lysine + ATP = L-lysyl-tRNA(Lys) + AMP + diphosphate. In Ureaplasma urealyticum serovar 10 (strain ATCC 33699 / Western), this protein is Lysine--tRNA ligase.